Consider the following 312-residue polypeptide: Glycerol-3-phosphate dehydrogenase [NAD(P)+] (312 aa).

Residues tryptophan 11, arginine 30, arginine 31, and lysine 95 each contribute to the NADPH site. The sn-glycerol 3-phosphate site is built by lysine 95, glycine 123, and serine 125. Alanine 127 is a binding site for NADPH. The sn-glycerol 3-phosphate site is built by lysine 177, aspartate 230, serine 240, arginine 241, and asparagine 242. Lysine 177 acts as the Proton acceptor in catalysis. Arginine 241 lines the NADPH pocket. Valine 265 and glutamate 267 together coordinate NADPH.

The protein belongs to the NAD-dependent glycerol-3-phosphate dehydrogenase family.

It is found in the cytoplasm. It catalyses the reaction sn-glycerol 3-phosphate + NAD(+) = dihydroxyacetone phosphate + NADH + H(+). The enzyme catalyses sn-glycerol 3-phosphate + NADP(+) = dihydroxyacetone phosphate + NADPH + H(+). It functions in the pathway membrane lipid metabolism; glycerophospholipid metabolism. Its function is as follows. Catalyzes the reduction of the glycolytic intermediate dihydroxyacetone phosphate (DHAP) to sn-glycerol 3-phosphate (G3P), the key precursor for phospholipid synthesis. The chain is Glycerol-3-phosphate dehydrogenase [NAD(P)+] from Helicobacter pylori (strain HPAG1).